A 385-amino-acid chain; its full sequence is Transcription factor-like protein DPB (385 aa).

2 disordered regions span residues 1 to 53 (MTTT…EQTI) and 71 to 102 (DIQG…KTGR). The segment covering 22-31 (PSTRSWGTAV) has biased composition (polar residues). A compositionally biased stretch (low complexity) spans 32–53 (SGQSVSTSGSMGSPSSRSEQTI). A DNA-binding region spans residues 101–184 (GRGLRQFSMK…KKEIQWRGLP (84 aa)). The DEF box signature appears at 150–184 (DEKNIRRRVYDALNVLMAMDIISKDKKEIQWRGLP). Positions 185–234 (RTSLSDIEELKNERLSLRNRIEKKTAYSQELEEQYVGLQNLIQRNEHLYS) form a coiled coil. The segment at 296–385 (PPQQPNGRNN…IMNSSMKPEN (90 aa)) is disordered. Positions 300 to 327 (PNGRNNSQLVCHNFTPENPNKGPSTGPT) are enriched in polar residues. The span at 336–349 (HLQSQQHQQHSQLQ) shows a compositional bias: low complexity. Polar residues predominate over residues 355–364 (ETNNVTSSAD).

It belongs to the E2F/DP family. As to quaternary structure, heterodimer with non-phosphorylated E2FC. No interaction with phosphorylated E2FC. Interacts preferentially with E2FC, but also with E2FA and E2FB. Interacts with SKP2A. Targeted for proteasomal degradation by the SCF(SKP2A) E3 ubiquitin ligase complex. Phosphorylated. Ubiquitous.

It is found in the nucleus. The protein resides in the cytoplasm. Its function is as follows. Involved in the regulation of the G1/S transition. Increases the DNA binding activity of E2F proteins after heterodimerization. The complex DPB/E2FC restricts cell division and lateral root initiation and may function as a negative regulator of E2F-regulated genes. The interaction with SKP2A is controlled by auxin. This chain is Transcription factor-like protein DPB (DPB), found in Arabidopsis thaliana (Mouse-ear cress).